We begin with the raw amino-acid sequence, 159 residues long: Single-stranded DNA-binding protein 2 (159 aa).

One can recognise an SSB domain in the interval 2–104 (MNRVVLVGRL…VVAESVQFLE (103 aa)). A disordered region spans residues 106-159 (RNHAEGATSNNYQNEANYSNNNKTSSYRADTSQKSDSFANEGKPIDINPDDLPF). Low complexity predominate over residues 114–127 (SNNYQNEANYSNNN). Positions 128-143 (KTSSYRADTSQKSDSF) are enriched in polar residues.

In terms of assembly, homotetramer.

The polypeptide is Single-stranded DNA-binding protein 2 (ssb2) (Listeria innocua serovar 6a (strain ATCC BAA-680 / CLIP 11262)).